The sequence spans 194 residues: MIEKSMPAQNTHAADADLIGPDKSLLIVDDDTAFLRRLARAMEARGFAVEIAESVAEGIAKAKTRPPKHAVIDLRLSDGSGLDVIEAIRGRRDDTRMIVLTGYGNIATAVNAVKLGALDYLAKPADADDILAALIQRPGERVEPPENPMSADRVRWEHIQRVYEMCERNVSETARRLNMHRRTLQRILAKRAPK.

Residues 24–138 (SLLIVDDDTA…DILAALIQRP (115 aa)) enclose the Response regulatory domain. D73 bears the 4-aspartylphosphate mark.

Post-translationally, phosphorylated by ActS.

Member of the two-component regulatory system ActS/ActR acting in acid tolerance. These data implicate that a two-component sensor may be involved in pH sensing and/or response. The chain is Acid tolerance regulatory protein ActR (actR) from Rhizobium meliloti (strain 1021) (Ensifer meliloti).